The chain runs to 520 residues: GMP synthase [glutamine-hydrolyzing] (520 aa).

The Glutamine amidotransferase type-1 domain occupies 9–202; it reads TVLIVDFGSQ…VHNIAGIEGD (194 aa). Cysteine 86 (nucleophile) is an active-site residue. Residues histidine 176 and glutamate 178 contribute to the active site. The region spanning 203–395 is the GMPS ATP-PPase domain; the sequence is WTMRAYREHA…LGLPESFIGR (193 aa). Position 230 to 236 (230 to 236) interacts with ATP; that stretch reads SGGVDSS.

As to quaternary structure, homodimer.

The enzyme catalyses XMP + L-glutamine + ATP + H2O = GMP + L-glutamate + AMP + diphosphate + 2 H(+). Its pathway is purine metabolism; GMP biosynthesis; GMP from XMP (L-Gln route): step 1/1. Its function is as follows. Catalyzes the synthesis of GMP from XMP. The sequence is that of GMP synthase [glutamine-hydrolyzing] from Mesorhizobium japonicum (strain LMG 29417 / CECT 9101 / MAFF 303099) (Mesorhizobium loti (strain MAFF 303099)).